We begin with the raw amino-acid sequence, 642 residues long: Threonine--tRNA ligase (642 aa).

The 61-residue stretch at 1–61 folds into the TGS domain; the sequence is MPVITLPDGS…ETDSDLSIIT (61 aa). Residues 243–534 form a catalytic region; sequence DHRKIGKQLD…LIEEYAGKFP (292 aa). Zn(2+)-binding residues include C334, H385, and H511.

The protein belongs to the class-II aminoacyl-tRNA synthetase family. Homodimer. It depends on Zn(2+) as a cofactor.

It localises to the cytoplasm. The enzyme catalyses tRNA(Thr) + L-threonine + ATP = L-threonyl-tRNA(Thr) + AMP + diphosphate + H(+). In terms of biological role, catalyzes the attachment of threonine to tRNA(Thr) in a two-step reaction: L-threonine is first activated by ATP to form Thr-AMP and then transferred to the acceptor end of tRNA(Thr). Also edits incorrectly charged L-seryl-tRNA(Thr). This Shewanella pealeana (strain ATCC 700345 / ANG-SQ1) protein is Threonine--tRNA ligase.